The sequence spans 142 residues: Serine/threonine-protein kinase BtrW (142 aa).

Belongs to the anti-sigma-factor family. As to quaternary structure, probably able to multimerize; interacts with BtrV.

It carries out the reaction L-seryl-[protein] + ATP = O-phospho-L-seryl-[protein] + ADP + H(+). The enzyme catalyses L-threonyl-[protein] + ATP = O-phospho-L-threonyl-[protein] + ADP + H(+). Functionally, possible negative regulator of sigma-B activity. Phosphorylates and inactivates its specific antagonist protein, BtrV. Upon phosphorylation of BtrV, BtrW is released and binds to an unknown partner(s) that might be sigma-B, thereby blocking its ability to form a complex with its partner (possibly an RNA polymerase holoenzyme (E-sigma-B)). Involved in type III secretion system (T3SS). Phosphorylates BtrV. The polypeptide is Serine/threonine-protein kinase BtrW (btrW) (Bordetella bronchiseptica (strain ATCC BAA-588 / NCTC 13252 / RB50) (Alcaligenes bronchisepticus)).